A 136-amino-acid polypeptide reads, in one-letter code: Neuropeptide CCHamide-2 (136 aa).

Residues Met-1 to Ala-24 form the signal peptide. A disulfide bridge links Cys-28 with Cys-35. Histidine amide is present on His-39. A disordered region spans residues Arg-42–Pro-78. The propeptide occupies Ser-43–Asn-136. The span at Ser-48 to Gly-59 shows a compositional bias: gly residues.

Expressed in endocrine cells of the larval midgut (at protein level). Also expressed in endocrine cells of the midgut of adult males and females (at protein level). In the midgut, expression occurs mainly in the anterior region (at protein level). In the larval central nervous system, expressed in about 40 neurons in the brain hemispheres and ventral nerve cord (at protein level). Highly expressed in larval and adult gut with low levels in larval and adult brain. Very little expression in the larval fat body. However, another study shows high levels of expression in the larval fat body as well as the larval gut with low levels in the larval central nervous system.

The protein localises to the secreted. In terms of biological role, ligand for the CCHamide-2 receptor CCHa2-R. In one study, shown to be an orexigenic peptide which induces appetite and stimulates food intake, leading to the release of insulin-like peptides which stimulate growth. In another study, shown to be a nutrient-sensitive peptide derived from peripheral tissues which controls growth by directly regulating the production and release of insulin-like peptides. This chain is Neuropeptide CCHamide-2, found in Drosophila melanogaster (Fruit fly).